The sequence spans 288 residues: Syntaxin-1A (288 aa).

Positions 1–13 (MKDRTQELRTAKD) are enriched in basic and acidic residues. A disordered region spans residues 1-20 (MKDRTQELRTAKDSDDDDDV). Topologically, residues 1–265 (MKDRTQELRT…KYQSKARRKK (265 aa)) are cytoplasmic. Residues Ser14, Ser64, and Ser95 each carry the phosphoserine modification. Residues 68-109 (DEKTKEELEELMSDIKKTANKVRSKLKSIEQSIEQEEGLNRS) adopt a coiled-coil conformation. A Phosphoserine; by DAPK1 modification is found at Ser188. The t-SNARE coiled-coil homology domain occupies 192–254 (LSEIETRHSE…ERAVSDTKKA (63 aa)). Residues Lys252, Lys253, and Lys256 each participate in a glycyl lysine isopeptide (Lys-Gly) (interchain with G-Cter in SUMO) cross-link. Residues 266 to 288 (IMIIICCVILGIIIASTIGGIFG) form a helical; Anchor for type IV membrane protein membrane-spanning segment.

The protein belongs to the syntaxin family. As to quaternary structure, part of the SNARE core complex containing SNAP25, VAMP2 and STX1A; this complex constitutes the basic catalytic machinery of the complex neurotransmitter release apparatus. The SNARE complex interacts with CPLX1. Interacts with STXBP1. The interaction with STXBP1 promotes assembly of the SNARE complex. Interacts (via C-terminus) with KCNB1 (via C-terminus); the interaction increases in a calcium-dependent manner and induces a pore-independent enhancement of exocytosis in neuroendocrine cells, chromaffin cells, pancreatic beta cells and from the soma of dorsal root ganglia (DRG) neurons. Interacts with SYTL4. Interacts with STXBP6. Interacts with PLCL1 (via C2 domain). Interacts with OTOF. Interacts with LGI3. Interacts (via the H3 domain) with SLC6A4 (via the N-terminus); this interaction regulates SLC4A6 channel conductance in thalamocortical neurons. Interacts with SYT6 and SYT8; the interaction is Ca(2+)-dependent. Interacts with VAMP8. Interacts with SNAP23. Interacts with VAPA and SYBU. Interacts with PRRT2. Interacts with SEPT8. Interacts with STXBP5L. Interacts with synaptotagmin-1/SYT1. Interacts with SEPTIN5; in the cerebellar cortex. Interacts with SEPTIN4; in the striatum. Phosphorylated by CK2. Phosphorylation at Ser-188 by DAPK1 significantly decreases its interaction with STXBP1. In terms of processing, (Microbial infection) Targeted and hydrolyzed by C.botulinum neurotoxin type C (BoNT/C), which hydrolyzes the 253-Lys-|-Ala-254 bond. Cleavage inhibits neurotransmitter release. Post-translationally, phosphorylated by CK2. Phosphorylation at Ser-188 by DAPK1 significantly decreases its interaction with STXBP1. Sumoylated, sumoylation is required for regulation of synaptic vesicle endocytosis. Expressed predominantly in cerebral cortex, hippocampus, cerebellum, adrenal medulla and retina with weak expression detected in non-neuronal tissues.

Its subcellular location is the cytoplasmic vesicle. The protein resides in the secretory vesicle. It is found in the synaptic vesicle membrane. It localises to the cell membrane. The protein localises to the synapse. Its subcellular location is the synaptosome. Functionally, plays an essential role in hormone and neurotransmitter calcium-dependent exocytosis and endocytosis. Part of the SNARE (Soluble NSF Attachment Receptor) complex composed of SNAP25, STX1A and VAMP2 which mediates the fusion of synaptic vesicles with the presynaptic plasma membrane. STX1A and SNAP25 are localized on the plasma membrane while VAMP2 resides in synaptic vesicles. The pairing of the three SNAREs from the N-terminal SNARE motifs to the C-terminal anchors leads to the formation of the SNARE complex, which brings membranes into close proximity and results in final fusion. Participates in the calcium-dependent regulation of acrosomal exocytosis in sperm. Also plays an important role in the exocytosis of hormones such as insulin or glucagon-like peptide 1 (GLP-1). This Rattus norvegicus (Rat) protein is Syntaxin-1A (Stx1a).